Reading from the N-terminus, the 237-residue chain is MRPSKRAADELRPVSLERAVSRYAEGSCLVSFGNTRVLCTASLEERAPPWLRGSGKGWVTAEYAMLPRATHERTRREVGSGKPSGRTQEIQRLIGRSLRAVTNLPAMGERQITIDCDVIQADGGTRTAAITGAWVALHDCFAWMRTRSIISVDPLRDHVAAVSCGLYKGTPVLDLDYAEDSAAETDANFVLTGRGGIVEVQGTAEMEPFTQEQLLELLGLARAGTERLVALQKEAIA.

Residues arginine 86 and 124-126 each bind phosphate; that span reads GTR.

This sequence belongs to the RNase PH family. As to quaternary structure, homohexameric ring arranged as a trimer of dimers.

It catalyses the reaction tRNA(n+1) + phosphate = tRNA(n) + a ribonucleoside 5'-diphosphate. Its function is as follows. Phosphorolytic 3'-5' exoribonuclease that plays an important role in tRNA 3'-end maturation. Removes nucleotide residues following the 3'-CCA terminus of tRNAs; can also add nucleotides to the ends of RNA molecules by using nucleoside diphosphates as substrates, but this may not be physiologically important. Probably plays a role in initiation of 16S rRNA degradation (leading to ribosome degradation) during starvation. The sequence is that of Ribonuclease PH from Methylobacterium radiotolerans (strain ATCC 27329 / DSM 1819 / JCM 2831 / NBRC 15690 / NCIMB 10815 / 0-1).